The chain runs to 347 residues: NADH-ubiquinone oxidoreductase chain 2 (347 aa).

11 helical membrane-spanning segments follow: residues 1 to 21 (MNPM…SIVM), 25 to 45 (HWFL…PVLM), 60 to 80 (FLTQ…NLMF), 96 to 116 (MLLT…FWVP), 127 to 147 (GLIL…QIYP), 149 to 169 (INTN…GWGG), 178 to 198 (IMAY…IYNP), 202 to 222 (LLNL…LIFA), 239 to 259 (IITI…PLTG), 274 to 294 (NSVI…FFYM), and 326 to 346 (MMPL…FILL).

This sequence belongs to the complex I subunit 2 family. As to quaternary structure, core subunit of respiratory chain NADH dehydrogenase (Complex I) which is composed of 45 different subunits. Interacts with TMEM242.

The protein resides in the mitochondrion inner membrane. It carries out the reaction a ubiquinone + NADH + 5 H(+)(in) = a ubiquinol + NAD(+) + 4 H(+)(out). In terms of biological role, core subunit of the mitochondrial membrane respiratory chain NADH dehydrogenase (Complex I) that is believed to belong to the minimal assembly required for catalysis. Complex I functions in the transfer of electrons from NADH to the respiratory chain. The immediate electron acceptor for the enzyme is believed to be ubiquinone. This chain is NADH-ubiquinone oxidoreductase chain 2, found in Suncus etruscus (Etruscan shrew).